Consider the following 819-residue polypeptide: Protein kinase C-binding protein NELL2 (819 aa).

The signal sequence occupies residues 1–24 (MHAMESRVLLRTFCVILGLGAVWG). N-linked (GlcNAc...) asparagine glycosylation is found at asparagine 56, asparagine 228, asparagine 296, and asparagine 301. The 165-residue stretch at 67 to 231 (PRSIKASTAT…AQCPDLNRTC (165 aa)) folds into the Laminin G-like domain. Residues 275 to 334 (RTCTVKGTTYRESESWTDGCKNCTCLNGTIQCETLVCPAPDCPPKSAPAYVDGKCCKECK) form the VWFC 1 domain. Residues 400–442 (GYDFCSEKHTCMENSVCRNLNDRAVCSCRDGFRALREDNAYCE) enclose the EGF-like 1 domain. Cystine bridges form between cysteine 404/cysteine 416, cysteine 410/cysteine 425, and cysteine 427/cysteine 441. Residues aspartate 443, isoleucine 444, and glutamate 446 each coordinate Ca(2+). The EGF-like 2; calcium-binding domain maps to 443-484 (DIDECAEGRHYCRENTMCVNTPGSFMCICKTGYIRIDDYSCT). 9 cysteine pairs are disulfide-bonded: cysteine 447–cysteine 460, cysteine 454–cysteine 469, cysteine 471–cysteine 483, cysteine 489–cysteine 502, cysteine 496–cysteine 511, cysteine 513–cysteine 524, cysteine 528–cysteine 538, cysteine 532–cysteine 544, and cysteine 546–cysteine 555. Positions 462, 463, and 466 each coordinate Ca(2+). The EGF-like 3; calcium-binding domain occupies 485–525 (EHDECLTNQHNCDENALCFNTVGGHNCVCKPGYTGNGTTCK). N-linked (GlcNAc...) asparagine glycosylation occurs at asparagine 520. One can recognise an EGF-like 4 domain in the interval 526-556 (AFCKDGCRNGGACIAANVCACPQGFTGPSCE). Threonine 551 is a glycosylation site (O-linked (GlcNAc...) threonine). Positions 558, 559, and 561 each coordinate Ca(2+). An EGF-like 5; calcium-binding domain is found at 558–604 (DIDECSEGFVQCDSRANCINLPGWYHCECRDGYHDNGMFAPGGESCE). Disulfide bonds link cysteine 562–cysteine 575, cysteine 569–cysteine 584, and cysteine 586–cysteine 603. Positions 577, 578, and 581 each coordinate Ca(2+). Ca(2+) is bound by residues aspartate 605, isoleucine 606, and glutamate 608. In terms of domain architecture, EGF-like 6; calcium-binding spans 605 to 640 (DIDECGTGRHSCTNDTICFNLDGGYDCRCPHGKNCT). Cystine bridges form between cysteine 609-cysteine 622, cysteine 616-cysteine 631, and cysteine 633-cysteine 639. N-linked (GlcNAc...) asparagine glycosylation occurs at asparagine 618. Ca(2+) is bound by residues asparagine 624, leucine 625, and glycine 628. An N-linked (GlcNAc...) asparagine glycan is attached at asparagine 638. Residues 701-759 (SQCLHQNGETVYNSGDTWVQDCRQCRCLQGEVDCWPLACPEVECEFSVLPENECCPRCV) form the VWFC 2 domain.

As to quaternary structure, homotrimer. Interacts with NICOL1; this interaction triggers epididymal differentiation. Interacts (via EGF domains) with ROBO3 (via FN domains); binding to ROBO3 induces repulsive guidance cue for commissural axons. Expressed in brain and testis but not in epididymis. Expressed in regions flanking the commissural axon trajectory, including the ventral horn.

The protein resides in the secreted. Its function is as follows. Plays multiple roles in neural tissues, regulates neuronal proliferation, survival, differentiation, polarization, as well as axon guidance and synaptic functions. Plays an important role in axon development during neuronal differentiation through the MAPK intracellular signaling pathway. Via binding to its receptor ROBO3, plays a role in axon guidance, functioning as a repulsive axon guidance cue that contributes to commissural axon guidance to the midline. Required for neuron survival through the modulation of MAPK signaling pathways too. Involved in the regulation of hypothalamic GNRH secretion and the control of puberty. Functionally, epididymal-secreted protein that signals through a ROS1-pathway to regulate the epididymal initial segment (IS) maturation, sperm maturation and male fertility. The protein is Protein kinase C-binding protein NELL2 of Mus musculus (Mouse).